A 269-amino-acid polypeptide reads, in one-letter code: Putative hydro-lyase Atu3911 (269 aa).

Belongs to the D-glutamate cyclase family.

The polypeptide is Putative hydro-lyase Atu3911 (Agrobacterium fabrum (strain C58 / ATCC 33970) (Agrobacterium tumefaciens (strain C58))).